Here is a 278-residue protein sequence, read N- to C-terminus: Orotidine 5'-phosphate decarboxylase (278 aa).

Substrate contacts are provided by residues D40, 65–67 (KTH), 96–105 (DRKFIDIGNT), Y230, and R248. The active-site Proton donor is K98.

It belongs to the OMP decarboxylase family.

The catalysed reaction is orotidine 5'-phosphate + H(+) = UMP + CO2. Its pathway is pyrimidine metabolism; UMP biosynthesis via de novo pathway; UMP from orotate: step 2/2. In Penicillium chrysogenum (Penicillium notatum), this protein is Orotidine 5'-phosphate decarboxylase (pyrG).